The sequence spans 347 residues: Phosphate acyltransferase (347 aa).

It belongs to the PlsX family. In terms of assembly, homodimer. Probably interacts with PlsY.

It localises to the cytoplasm. The catalysed reaction is a fatty acyl-[ACP] + phosphate = an acyl phosphate + holo-[ACP]. Its pathway is lipid metabolism; phospholipid metabolism. In terms of biological role, catalyzes the reversible formation of acyl-phosphate (acyl-PO(4)) from acyl-[acyl-carrier-protein] (acyl-ACP). This enzyme utilizes acyl-ACP as fatty acyl donor, but not acyl-CoA. This chain is Phosphate acyltransferase, found in Sinorhizobium fredii (strain NBRC 101917 / NGR234).